A 141-amino-acid polypeptide reads, in one-letter code: uncharacterized protein (141 aa).

This is an uncharacterized protein from Human cytomegalovirus (strain AD169) (HHV-5).